A 323-amino-acid chain; its full sequence is MVLEMKVIAFVGYPLSGKSTAAEVARELGLPVVVMGDVVREEAARRGLELTDENLGKVARELREKEGMDAIAKRCIPKIRELLKEHGVVVVDGIRGVAEVERFKKAFGDDFVLIAIECPLEVRFERVKMRKRSDDVSSIEELKERDRREESWGLKEAMEMADFTVENTGSYEDFVEKIRQILLKLAKNVEIEIRTKIHPTESEDKVLKAIRNIFPDAEIEISEEGEVYGRAYSLDRFRELLRKQRILDTARSEILKGRNGKEVTIYLNKQTATVSRINFCDENAVLSPIKVTFRLNNIPFSRFLDYIAPETKDGRPVKEIDKL.

The UPF0200 stretch occupies residues 1–185; sequence MVLEMKVIAF…EKIRQILLKL (185 aa). 12-19 lines the ATP pocket; that stretch reads GYPLSGKS. The UPF0201 stretch occupies residues 186–323; that stretch reads AKNVEIEIRT…GRPVKEIDKL (138 aa).

It in the N-terminal section; belongs to the UPF0200 family. In the C-terminal section; belongs to the UPF0201 family.

The protein is UPF0200/UPF0201 protein AF_1395 of Archaeoglobus fulgidus (strain ATCC 49558 / DSM 4304 / JCM 9628 / NBRC 100126 / VC-16).